Consider the following 50-residue polypeptide: Small ribosomal subunit protein eS31 (50 aa).

The Zn(2+) site is built by Cys22, Cys25, Cys40, and Cys43. The segment at 22-43 (CPRCGPGVFMADHGDRWACGKC) adopts a C4-type zinc-finger fold.

Belongs to the eukaryotic ribosomal protein eS31 family. As to quaternary structure, part of the 30S ribosomal subunit. Zn(2+) serves as cofactor.

The chain is Small ribosomal subunit protein eS31 from Pyrococcus horikoshii (strain ATCC 700860 / DSM 12428 / JCM 9974 / NBRC 100139 / OT-3).